The following is a 425-amino-acid chain: Threonine synthase (425 aa).

Lysine 105 is subject to N6-(pyridoxal phosphate)lysine.

This sequence belongs to the threonine synthase family. The cofactor is pyridoxal 5'-phosphate.

The enzyme catalyses O-phospho-L-homoserine + H2O = L-threonine + phosphate. The protein operates within amino-acid biosynthesis; L-threonine biosynthesis; L-threonine from L-aspartate: step 5/5. Catalyzes the gamma-elimination of phosphate from L-phosphohomoserine and the beta-addition of water to produce L-threonine. The polypeptide is Threonine synthase (thrC) (Haemophilus influenzae (strain ATCC 51907 / DSM 11121 / KW20 / Rd)).